Here is a 203-residue protein sequence, read N- to C-terminus: 3-isopropylmalate dehydratase small subunit (203 aa).

This sequence belongs to the LeuD family. LeuD type 1 subfamily. In terms of assembly, heterodimer of LeuC and LeuD.

The enzyme catalyses (2R,3S)-3-isopropylmalate = (2S)-2-isopropylmalate. Its pathway is amino-acid biosynthesis; L-leucine biosynthesis; L-leucine from 3-methyl-2-oxobutanoate: step 2/4. Its function is as follows. Catalyzes the isomerization between 2-isopropylmalate and 3-isopropylmalate, via the formation of 2-isopropylmaleate. This Phenylobacterium zucineum (strain HLK1) protein is 3-isopropylmalate dehydratase small subunit.